A 290-amino-acid chain; its full sequence is ATP synthase gamma chain (290 aa).

It belongs to the ATPase gamma chain family. As to quaternary structure, F-type ATPases have 2 components, CF(1) - the catalytic core - and CF(0) - the membrane proton channel. CF(1) has five subunits: alpha(3), beta(3), gamma(1), delta(1), epsilon(1). CF(0) has three main subunits: a, b and c.

The protein resides in the cell membrane. Its function is as follows. Produces ATP from ADP in the presence of a proton gradient across the membrane. The gamma chain is believed to be important in regulating ATPase activity and the flow of protons through the CF(0) complex. This chain is ATP synthase gamma chain, found in Akkermansia muciniphila (strain ATCC BAA-835 / DSM 22959 / JCM 33894 / BCRC 81048 / CCUG 64013 / CIP 107961 / Muc).